The chain runs to 837 residues: V-type proton ATPase 116 kDa subunit a 1 (837 aa).

Residues 1-388 (MGELFRSEEM…DAYGIGTYRE (388 aa)) are Cytoplasmic-facing. A phosphothreonine mark is found at Thr250 and Thr360. At Tyr364 the chain carries Phosphotyrosine. A helical transmembrane segment spans residues 389–407 (INPAPYTIITFPFLFAVMF). The Vacuolar portion of the chain corresponds to 408–409 (GD). A helical membrane pass occupies residues 410-426 (FGHGILMTLFAVWMVLR). At 427 to 441 (ESRILSQKNENEMFS) the chain is on the cytoplasmic side. The chain crosses the membrane as a helical span at residues 442–471 (TVFSGRYIILLMGVFSMYTGLIYNDCFSKS). At 472 to 534 (LNIFGSSWSV…ATNKLTFLNS (63 aa)) the chain is on the vacuolar side. An N-linked (GalNAc...) asparagine glycan is attached at Asn488. The helical transmembrane segment at 535 to 554 (FKMKMSVILGIIHMLFGVSL) threads the bilayer. Over 555-572 (SLFNHIYFKKPLNIYFGF) the chain is Cytoplasmic. A helical membrane pass occupies residues 573–593 (IPEIIFMTSLFGYLVILIFYK). Topologically, residues 594–638 (WTAYDAHTSENAPSLLIHFINMFLFSYPESGYSMLYSGQKGIQCF) are vacuolar. A helical transmembrane segment spans residues 639-658 (LVVVALLCVPWMLLFKPLVL). Residues 659–724 (RRQYLRRKHL…DTMVHQAIHT (66 aa)) lie on the Cytoplasmic side of the membrane. The chain crosses the membrane as a helical span at residues 725–749 (IEYCLGCISNTASYLRLWALSLAHA). Residues 750–770 (QLSEVLWTMVIHIGLSVKSLA) lie on the Vacuolar side of the membrane. A helical transmembrane segment spans residues 771–809 (GGLVLFFFFTAFATLTVAILLIMEGLSAFLHALRLHWVE). At 810–837 (FQNKFYSGTGFKFLPFSFEHIREGKFEE) the chain is on the cytoplasmic side.

This sequence belongs to the V-ATPase 116 kDa subunit family. V-ATPase is a heteromultimeric enzyme made up of two complexes: the ATP-hydrolytic V1 complex and the proton translocation V0 complex. The V1 complex consists of three catalytic AB heterodimers that form a heterohexamer, three peripheral stalks each consisting of EG heterodimers, one central rotor including subunits D and F, and the regulatory subunits C and H. The proton translocation complex V0 consists of the proton transport subunit a, a ring of proteolipid subunits c9c'', rotary subunit d, subunits e and f, and the accessory subunits ATP6AP1/Ac45 and ATP6AP2/PRR. Interacts with SPAAR.

It localises to the cytoplasmic vesicle. The protein resides in the clathrin-coated vesicle membrane. It is found in the secretory vesicle. Its subcellular location is the synaptic vesicle membrane. The protein localises to the melanosome. Functionally, subunit of the V0 complex of vacuolar(H+)-ATPase (V-ATPase), a multisubunit enzyme composed of a peripheral complex (V1) that hydrolyzes ATP and a membrane integral complex (V0) that transports protons across cellular membranes. V-ATPase is responsible for the acidification of various organelles, such as lysosomes, endosomes, the trans-Golgi network, and secretory granules, including synaptic vesicles. In certain cell types, can be exported to the plasma membrane, where it is involved in the acidification of the extracellular environment. Required for assembly and activity of the vacuolar ATPase. Through its action on compartment acidification, plays an essential role in neuronal development in terms of integrity and connectivity of neurons. The polypeptide is V-type proton ATPase 116 kDa subunit a 1 (ATP6V0A1) (Homo sapiens (Human)).